A 227-amino-acid chain; its full sequence is MKVSYHGHSVVKIEANGKVILIDPFLTGNPKTDLKAEDVKVDAILLSHGHGDHVGDTVELAKKNNAVVVAPFELATFLSWQGVNTHPMHIGGSHEFDFGKVKLTQAFHGSSYIDEENKTITYTGMPAGILFTAEEKTVYHAGDTALFSDMKLIGELNKVDLAFLPIGDNFTMGPEDAVLAAKWINAKTVVPMHYNTFPVIEQDPYQFVEKLQNCTGKVLEAGESITL.

The protein belongs to the UPF0173 family.

The sequence is that of UPF0173 metal-dependent hydrolase BCB4264_A4722 from Bacillus cereus (strain B4264).